The primary structure comprises 488 residues: 3-octaprenyl-4-hydroxybenzoate carboxy-lyase (488 aa).

Residue asparagine 172 participates in Mn(2+) binding. Prenylated FMN-binding positions include 175–177, 189–191, and 194–195; these read IYR, RWL, and RG. Residue glutamate 238 participates in Mn(2+) binding. Aspartate 287 serves as the catalytic Proton donor.

This sequence belongs to the UbiD family. As to quaternary structure, homohexamer. Prenylated FMN is required as a cofactor. It depends on Mn(2+) as a cofactor.

It is found in the cell membrane. The enzyme catalyses a 4-hydroxy-3-(all-trans-polyprenyl)benzoate + H(+) = a 2-(all-trans-polyprenyl)phenol + CO2. It participates in cofactor biosynthesis; ubiquinone biosynthesis. Functionally, catalyzes the decarboxylation of 3-octaprenyl-4-hydroxy benzoate to 2-octaprenylphenol, an intermediate step in ubiquinone biosynthesis. The sequence is that of 3-octaprenyl-4-hydroxybenzoate carboxy-lyase from Pseudomonas putida (strain ATCC 47054 / DSM 6125 / CFBP 8728 / NCIMB 11950 / KT2440).